The primary structure comprises 416 residues: UDP-N-acetylglucosamine 1-carboxyvinyltransferase (416 aa).

22-23 (KN) is a binding site for phosphoenolpyruvate. UDP-N-acetyl-alpha-D-glucosamine is bound at residue arginine 92. Residue cysteine 116 is the Proton donor of the active site. At cysteine 116 the chain carries 2-(S-cysteinyl)pyruvic acid O-phosphothioketal. UDP-N-acetyl-alpha-D-glucosamine contacts are provided by residues 121–125 (RPVDQ), aspartate 304, and isoleucine 326.

The protein belongs to the EPSP synthase family. MurA subfamily.

It is found in the cytoplasm. The catalysed reaction is phosphoenolpyruvate + UDP-N-acetyl-alpha-D-glucosamine = UDP-N-acetyl-3-O-(1-carboxyvinyl)-alpha-D-glucosamine + phosphate. It functions in the pathway cell wall biogenesis; peptidoglycan biosynthesis. In terms of biological role, cell wall formation. Adds enolpyruvyl to UDP-N-acetylglucosamine. The protein is UDP-N-acetylglucosamine 1-carboxyvinyltransferase of Aromatoleum aromaticum (strain DSM 19018 / LMG 30748 / EbN1) (Azoarcus sp. (strain EbN1)).